The sequence spans 477 residues: Tripartite motif-containing protein 72 (477 aa).

Zn(2+) is bound by residues C14, C17, C29, H31, C34, C37, C53, C56, C86, H89, C97, D100, C105, C108, H114, and H117. Residues 14 to 57 form an RING-type zinc finger; it reads CPLCLQLFDAPVTAECGHSFCRACLSRVAGEPAADGTVNCPCCQ. The B box-type zinc finger occupies 81 to 122; sequence VPQGHCEEHLDPLSIYCEQDRVLVCGVCASLGSHRGHRLLPA. Residues 135–232 are a coiled coil; sequence QQKLQLQEAS…EKVLEEVADK (98 aa). S255 carries the post-translational modification Phosphoserine. The 205-residue stretch at 271 to 475 folds into the B30.2/SPRY domain; the sequence is DFKFQVWRKM…PLLLVGPDGQ (205 aa).

This sequence belongs to the TRIM/RBCC family. Homodimer. Homooligomer; disulfide-linked. Oligomerizes on the phospholipid membrane. Interacts with DYSF and CAV3. Post-translationally, disulfide bond formation at Cys-242 occurs in case of membrane damage that cause the entry of the oxidized milieu of the extracellular space, resulting in homooligomerization. Muscle-specific.

It localises to the cell membrane. It is found in the sarcolemma. Its subcellular location is the cytoplasmic vesicle membrane. The enzyme catalyses S-ubiquitinyl-[E2 ubiquitin-conjugating enzyme]-L-cysteine + [acceptor protein]-L-lysine = [E2 ubiquitin-conjugating enzyme]-L-cysteine + N(6)-ubiquitinyl-[acceptor protein]-L-lysine.. It participates in protein modification; protein ubiquitination. With respect to regulation, specifically binds phosphatidylserine. The binding to phospholipids enhances ubiquitination activity. Functionally, muscle-specific E3 ubiquitin-protein ligase that plays a central role in cell membrane repair by nucleating the assembly of the repair machinery at injury sites. Its ubiquitination activity is mediated by E2 ubiquitin-conjugating enzymes UBE2D1, UBE2D2 and UBE2D3. Acts as a sensor of oxidation: upon membrane damage, entry of extracellular oxidative environment results in disulfide bond formation and homooligomerization at the injury site. This oligomerization acts as a nucleation site for recruitment of TRIM72-containing vesicles to the injury site, leading to membrane patch formation. Probably acts upstream of the Ca(2+)-dependent membrane resealing process. Required for transport of DYSF to sites of cell injury during repair patch formation. Regulates membrane budding and exocytosis. May be involved in the regulation of the mobility of KCNB1-containing endocytic vesicles. In Oryctolagus cuniculus (Rabbit), this protein is Tripartite motif-containing protein 72.